A 349-amino-acid polypeptide reads, in one-letter code: tRNA pseudouridine synthase D (349 aa).

Residue Phe27 participates in substrate binding. Asp80 serves as the catalytic Nucleophile. Asn129 lines the substrate pocket. The TRUD domain occupies 155–303 (GVPNYFGPQR…VEAARRAMLL (149 aa)). Phe329 provides a ligand contact to substrate.

Belongs to the pseudouridine synthase TruD family.

The enzyme catalyses uridine(13) in tRNA = pseudouridine(13) in tRNA. Its function is as follows. Responsible for synthesis of pseudouridine from uracil-13 in transfer RNAs. This is tRNA pseudouridine synthase D from Cronobacter sakazakii (strain ATCC BAA-894) (Enterobacter sakazakii).